We begin with the raw amino-acid sequence, 189 residues long: Elongation factor P (189 aa).

Belongs to the elongation factor P family.

Its subcellular location is the cytoplasm. Its pathway is protein biosynthesis; polypeptide chain elongation. In terms of biological role, involved in peptide bond synthesis. Stimulates efficient translation and peptide-bond synthesis on native or reconstituted 70S ribosomes in vitro. Probably functions indirectly by altering the affinity of the ribosome for aminoacyl-tRNA, thus increasing their reactivity as acceptors for peptidyl transferase. In Onion yellows phytoplasma (strain OY-M), this protein is Elongation factor P.